Consider the following 112-residue polypeptide: Transmembrane protein 14C (112 aa).

4 consecutive transmembrane segments (helical) span residues 7 to 27 (VVPL…GGII), 32 to 52 (AGSV…SLGA), 62 to 82 (VWVF…RFYH), and 86 to 106 (FMPA…VGVS).

The protein belongs to the TMEM14 family.

It localises to the mitochondrion membrane. Functionally, required for normal heme biosynthesis. In Pongo abelii (Sumatran orangutan), this protein is Transmembrane protein 14C (TMEM14C).